We begin with the raw amino-acid sequence, 401 residues long: Probable tRNA sulfurtransferase (401 aa).

The 106-residue stretch at 60-165 folds into the THUMP domain; sequence EPIIDKLKTV…QDGTYVTCHD (106 aa). ATP-binding positions include 183–184, 208–209, Arg-265, Gly-287, and Gln-296; these read ML and HF.

Belongs to the ThiI family.

It is found in the cytoplasm. It catalyses the reaction [ThiI sulfur-carrier protein]-S-sulfanyl-L-cysteine + a uridine in tRNA + 2 reduced [2Fe-2S]-[ferredoxin] + ATP + H(+) = [ThiI sulfur-carrier protein]-L-cysteine + a 4-thiouridine in tRNA + 2 oxidized [2Fe-2S]-[ferredoxin] + AMP + diphosphate. The enzyme catalyses [ThiS sulfur-carrier protein]-C-terminal Gly-Gly-AMP + S-sulfanyl-L-cysteinyl-[cysteine desulfurase] + AH2 = [ThiS sulfur-carrier protein]-C-terminal-Gly-aminoethanethioate + L-cysteinyl-[cysteine desulfurase] + A + AMP + 2 H(+). It participates in cofactor biosynthesis; thiamine diphosphate biosynthesis. In terms of biological role, catalyzes the ATP-dependent transfer of a sulfur to tRNA to produce 4-thiouridine in position 8 of tRNAs, which functions as a near-UV photosensor. Also catalyzes the transfer of sulfur to the sulfur carrier protein ThiS, forming ThiS-thiocarboxylate. This is a step in the synthesis of thiazole, in the thiamine biosynthesis pathway. The sulfur is donated as persulfide by IscS. The protein is Probable tRNA sulfurtransferase of Geobacillus thermodenitrificans (strain NG80-2).